We begin with the raw amino-acid sequence, 241 residues long: Probable transcriptional regulatory protein LHK_02347 (241 aa).

The protein belongs to the TACO1 family.

It is found in the cytoplasm. The sequence is that of Probable transcriptional regulatory protein LHK_02347 from Laribacter hongkongensis (strain HLHK9).